The primary structure comprises 222 residues: uncharacterized protein (222 aa).

Glycine 2 is lipidated: N-myristoyl glycine; by host.

It belongs to the mimivirus R683/R861 family.

This is an uncharacterized protein from Acanthamoeba polyphaga mimivirus (APMV).